Here is a 472-residue protein sequence, read N- to C-terminus: Adenosylhomocysteinase (472 aa).

3 residues coordinate substrate: Thr60, Asp136, and Glu197. 198–200 provides a ligand contact to NAD(+); that stretch reads TTT. Substrate is bound by residues Lys227 and Asp231. NAD(+) contacts are provided by residues Asn232, 261–266, Glu284, Asn319, 340–342, and Asn388; these read GYGDVG and IGH.

This sequence belongs to the adenosylhomocysteinase family. NAD(+) serves as cofactor.

The protein resides in the cytoplasm. The enzyme catalyses S-adenosyl-L-homocysteine + H2O = L-homocysteine + adenosine. It functions in the pathway amino-acid biosynthesis; L-homocysteine biosynthesis; L-homocysteine from S-adenosyl-L-homocysteine: step 1/1. Functionally, may play a key role in the regulation of the intracellular concentration of adenosylhomocysteine. The polypeptide is Adenosylhomocysteinase (Maridesulfovibrio salexigens (strain ATCC 14822 / DSM 2638 / NCIMB 8403 / VKM B-1763) (Desulfovibrio salexigens)).